The chain runs to 1111 residues: Putative leucine--tRNA ligase, cytoplasmic (1111 aa).

Residues 74-84 (PYMNGALHLGH) carry the 'HIGH' region motif. S460 bears the Phosphoserine mark. Residues 737-741 (KMSKS) carry the 'KMSKS' region motif. K740 contacts ATP.

This sequence belongs to the class-I aminoacyl-tRNA synthetase family.

Its subcellular location is the cytoplasm. The enzyme catalyses tRNA(Leu) + L-leucine + ATP = L-leucyl-tRNA(Leu) + AMP + diphosphate. The chain is Putative leucine--tRNA ligase, cytoplasmic (lrs1) from Schizosaccharomyces pombe (strain 972 / ATCC 24843) (Fission yeast).